A 153-amino-acid polypeptide reads, in one-letter code: Ribonuclease P protein component (153 aa).

Belongs to the RnpA family. As to quaternary structure, consists of a catalytic RNA component (M1 or rnpB) and a protein subunit.

The enzyme catalyses Endonucleolytic cleavage of RNA, removing 5'-extranucleotides from tRNA precursor.. Functionally, RNaseP catalyzes the removal of the 5'-leader sequence from pre-tRNA to produce the mature 5'-terminus. It can also cleave other RNA substrates such as 4.5S RNA. The protein component plays an auxiliary but essential role in vivo by binding to the 5'-leader sequence and broadening the substrate specificity of the ribozyme. This Helicobacter acinonychis (strain Sheeba) protein is Ribonuclease P protein component.